The primary structure comprises 100 residues: uncharacterized protein (100 aa).

The protein belongs to the ycf15 family.

The protein resides in the plastid. It localises to the chloroplast. This is an uncharacterized protein from Panax ginseng (Korean ginseng).